The primary structure comprises 949 residues: Copper-transporting ATPase PAA1, chloroplastic (949 aa).

Residues 1–103 (MESTLSAFST…SSSPSFRSIS (103 aa)) constitute a chloroplast transit peptide. Residues 113-126 (YNGGSGGGGGGGSE) are compositionally biased toward gly residues. Residues 113–142 (YNGGSGGGGGGGSESGDSKSKLGANASDGV) form a disordered region. An HMA domain is found at 148 to 222 (DIIILDVGGM…HLTNCGFQST (75 aa)). 2 residues coordinate Cu(+): cysteine 159 and cysteine 162. The next 6 membrane-spanning stretches (helical) occupy residues 253-274 (LAVS…FLGV), 287-306 (FHVS…LVLD), 314-334 (GSPN…SVSS), 349-369 (EEPV…QRAK), 502-524 (VAGR…WNLF), and 543-560 (LQLS…ALGL). Residue aspartate 598 is the 4-aspartylphosphate intermediate of the active site. 807–814 (GDGINDAA) contacts ATP. Residues aspartate 808 and aspartate 812 each contribute to the Mg(2+) site. 2 helical membrane passes run 863-882 (KQNL…IAAG) and 895-913 (SMAG…TNSL). Residues 925-949 (DKNVKPEPKEGTKQPHENTRWKQSS) form a disordered region.

This sequence belongs to the cation transport ATPase (P-type) (TC 3.A.3) family. Type IB subfamily. Expressed in the shoots and roots.

It localises to the plastid. Its subcellular location is the chloroplast membrane. The catalysed reaction is Cu(+)(in) + ATP + H2O = Cu(+)(out) + ADP + phosphate + H(+). Its function is as follows. Mediates copper transfer across the plastid envelope. Required for the delivery of copper into the plastid stroma, which is essential for the function of copper proteins. Seems to be selective for monovalent copper Cu(+) transport. Also plays a role in glucose signaling-mediated cell proliferation of root meristem in non-green tissues. The polypeptide is Copper-transporting ATPase PAA1, chloroplastic (PAA1) (Arabidopsis thaliana (Mouse-ear cress)).